The chain runs to 257 residues: Aspartate/glutamate leucyltransferase (257 aa).

This sequence belongs to the R-transferase family. Bpt subfamily.

Its subcellular location is the cytoplasm. The catalysed reaction is N-terminal L-glutamyl-[protein] + L-leucyl-tRNA(Leu) = N-terminal L-leucyl-L-glutamyl-[protein] + tRNA(Leu) + H(+). The enzyme catalyses N-terminal L-aspartyl-[protein] + L-leucyl-tRNA(Leu) = N-terminal L-leucyl-L-aspartyl-[protein] + tRNA(Leu) + H(+). Functions in the N-end rule pathway of protein degradation where it conjugates Leu from its aminoacyl-tRNA to the N-termini of proteins containing an N-terminal aspartate or glutamate. The protein is Aspartate/glutamate leucyltransferase of Rhodopseudomonas palustris (strain HaA2).